The sequence spans 373 residues: Chorismate synthase (373 aa).

2 residues coordinate NADP(+): Arg48 and Arg54. Residues Arg125 to Ser127, Asn248 to Ala249, Gly288, Lys303 to Ser307, and Arg329 each bind FMN.

The protein belongs to the chorismate synthase family. In terms of assembly, homotetramer. FMNH2 serves as cofactor.

It carries out the reaction 5-O-(1-carboxyvinyl)-3-phosphoshikimate = chorismate + phosphate. It participates in metabolic intermediate biosynthesis; chorismate biosynthesis; chorismate from D-erythrose 4-phosphate and phosphoenolpyruvate: step 7/7. In terms of biological role, catalyzes the anti-1,4-elimination of the C-3 phosphate and the C-6 proR hydrogen from 5-enolpyruvylshikimate-3-phosphate (EPSP) to yield chorismate, which is the branch point compound that serves as the starting substrate for the three terminal pathways of aromatic amino acid biosynthesis. This reaction introduces a second double bond into the aromatic ring system. The protein is Chorismate synthase of Colwellia psychrerythraea (strain 34H / ATCC BAA-681) (Vibrio psychroerythus).